Here is a 372-residue protein sequence, read N- to C-terminus: Glutamate 5-kinase (372 aa).

Lys-14 contacts ATP. Substrate is bound by residues Ser-54, Asp-141, and Asn-153. ATP-binding positions include Thr-173–Asp-174 and Thr-215–Lys-221. Residues Ala-280–Val-358 enclose the PUA domain.

It belongs to the glutamate 5-kinase family.

The protein localises to the cytoplasm. It carries out the reaction L-glutamate + ATP = L-glutamyl 5-phosphate + ADP. Its pathway is amino-acid biosynthesis; L-proline biosynthesis; L-glutamate 5-semialdehyde from L-glutamate: step 1/2. Functionally, catalyzes the transfer of a phosphate group to glutamate to form L-glutamate 5-phosphate. This is Glutamate 5-kinase from Laribacter hongkongensis (strain HLHK9).